A 1429-amino-acid polypeptide reads, in one-letter code: Dicer-like protein 2 (1429 aa).

Positions 21-200 (MFEASLKGNI…TIEMNLNSVC (180 aa)) constitute a Helicase ATP-binding domain. 34–41 (MGTGSGKT) lines the ATP pocket. Positions 141 to 144 (DEAH) match the DEAH box motif. Residues 335 to 501 (ALISFLMSTE…EDRRRTEELR (167 aa)) enclose the Helicase C-terminal domain. The 95-residue stretch at 528 to 622 (AMQHLVHFCD…LPLTKSREFT (95 aa)) folds into the Dicer dsRNA-binding fold domain. RNase III domains follow at residues 874–1014 (ATRL…IDGG) and 1056–1250 (QENL…VDSG). The Mg(2+) site is built by Glu1095, Asp1236, and Glu1239.

Belongs to the helicase family. Dicer subfamily. The cofactor is Mg(2+). Mn(2+) serves as cofactor.

Dicer-like endonuclease involved in cleaving double-stranded RNA in the RNA interference (RNAi) pathway. Produces 21 to 25 bp dsRNAs (siRNAs) which target the selective destruction of homologous RNAs leading to sequence-specific suppression of gene expression, called post-transcriptional gene silencing (PTGS). Part of a broad host defense response against viral infection and transposons. The chain is Dicer-like protein 2 (dcl2) from Emericella nidulans (strain FGSC A4 / ATCC 38163 / CBS 112.46 / NRRL 194 / M139) (Aspergillus nidulans).